The sequence spans 250 residues: Small ribosomal subunit protein uS3 (250 aa).

The KH type-2 domain maps to 16–85; sequence IDEYLEKELE…NPQIEVKEVS (70 aa).

The protein belongs to the universal ribosomal protein uS3 family. As to quaternary structure, part of the 30S ribosomal subunit.

Its function is as follows. Binds the lower part of the 30S subunit head. The polypeptide is Small ribosomal subunit protein uS3 (Methanobrevibacter smithii (strain ATCC 35061 / DSM 861 / OCM 144 / PS)).